The following is a 457-amino-acid chain: Peptidyl-prolyl cis-trans isomerase FKBP5 (457 aa).

At Met1 the chain carries N-acetylmethionine. Basic and acidic residues predominate over residues 1-11; that stretch reads MTTDEGAKNSR. Positions 1-27 are disordered; the sequence is MTTDEGAKNSRENPTATVAEQGEDVTS. N6-acetyllysine is present on Lys28. 2 consecutive PPIase FKBP-type domains span residues 50–138 and 165–251; these read GDKV…LDFK and GARV…KSFE. TPR repeat units lie at residues 268-301, 317-350, and 351-384; these read AAIVKEKGTLYFKGGKYVQAVIQYGKIVSWLEME, LAAFLNLAMCYLKLREYTKAVECCDKALGLDSAN, and EKGLYRRGEAQLLMNEFESAKGDFEKVLEVNPQN. A disordered region spans residues 423-457; sequence EEANKAMSKKTSEGVTNEKLAVSHAVEEEKPEGHV. Ser445 bears the Phosphoserine mark. Positions 447-457 are enriched in basic and acidic residues; it reads AVEEEKPEGHV.

As to quaternary structure, part of a heteromultimeric cytoplasmic complex with HSP90AA1, HSPA1A/HSPA1B and steroid receptors. Upon ligand binding dissociates from the complex and FKBP4 takes its place. Interacts with functionally mature heterooligomeric progesterone receptor complexes along with HSP90 and TEBP. Interacts with NR3C1. Interacts with Akt/AKT1 and PHLPP1; enhancing dephosphorylation and subsequent activation of Akt/AKT1. Interacts with IFI44L; this interaction modulates the kinase activity of IKBKB and IKBKE. Interacts with IKBKB and IKBKE. Post-translationally, acetylation impairs ability to promote interaction between Akt/AKT1 and PHLPP1. Deacetylation by SIRT7 promotes interaction between Akt/AKT1 and PHLPP1, leading to suppress Akt/AKT1 activation. In terms of processing, ubiquitinated, leading to degradation in a proteasome-dependent manner. Deubiquitinated by USP49, leading to stabilization.

The protein localises to the cytoplasm. It is found in the nucleus. It catalyses the reaction [protein]-peptidylproline (omega=180) = [protein]-peptidylproline (omega=0). With respect to regulation, inhibited by both FK506 and rapamycin. Its function is as follows. Immunophilin protein with PPIase and co-chaperone activities. Component of unligated steroid receptors heterocomplexes through interaction with heat-shock protein 90 (HSP90). Plays a role in the intracellular trafficking of heterooligomeric forms of steroid hormone receptors maintaining the complex into the cytoplasm when unliganded. Acts as a regulator of Akt/AKT1 activity by promoting the interaction between Akt/AKT1 and PHLPP1, thereby enhancing dephosphorylation and subsequent activation of Akt/AKT1. Interacts with IKBKE and IKBKB which facilitates IKK complex assembly leading to increased IKBKE and IKBKB kinase activity, NF-kappaB activation, and IFN production. This is Peptidyl-prolyl cis-trans isomerase FKBP5 (FKBP5) from Aotus nancymaae (Ma's night monkey).